The sequence spans 338 residues: MKVYYDKDADLSLIKGKKVTIVGYGSQGHAHAQNLNDSGVKVTVAVRKGGASWDKAKAAGLKVEEIAKAVKTADLVMILLPDENIPQVYKEEVEPNIKKGATLAFAHGFNVHYNQVVPREDLDVIMVAPKGPGHTVRSEYLRGGGVPSLIAVYQDKSGKAKDIALSYAAANGGTKGGVIETNFKEETETDLFGEQAVLCGGAVELVKMGFETLTEAGYAPEMAYFECLHELKLIVDLMYEGGIANMNYSISNNAEYGEYVTGPEVINAQSREAMRNALKRIQTGEYAKMFIQEGKTNYPSMTARRRLNAEHPIEQVGGQLRDMMPWIKAKALVDKSKN.

Positions 1–181 (MKVYYDKDAD…GGTKGGVIET (181 aa)) constitute a KARI N-terminal Rossmann domain. NADP(+) is bound by residues 24-27 (YGSQ), Arg-47, and Ser-52. Residue His-107 is part of the active site. Gly-133 serves as a coordination point for NADP(+). The KARI C-terminal knotted domain maps to 182–327 (NFKEETETDL…GQLRDMMPWI (146 aa)). Asp-190, Glu-194, Glu-226, and Glu-230 together coordinate Mg(2+). Substrate is bound at residue Ser-251.

This sequence belongs to the ketol-acid reductoisomerase family. Mg(2+) serves as cofactor.

It carries out the reaction (2R)-2,3-dihydroxy-3-methylbutanoate + NADP(+) = (2S)-2-acetolactate + NADPH + H(+). The catalysed reaction is (2R,3R)-2,3-dihydroxy-3-methylpentanoate + NADP(+) = (S)-2-ethyl-2-hydroxy-3-oxobutanoate + NADPH + H(+). The protein operates within amino-acid biosynthesis; L-isoleucine biosynthesis; L-isoleucine from 2-oxobutanoate: step 2/4. Its pathway is amino-acid biosynthesis; L-valine biosynthesis; L-valine from pyruvate: step 2/4. Its function is as follows. Involved in the biosynthesis of branched-chain amino acids (BCAA). Catalyzes an alkyl-migration followed by a ketol-acid reduction of (S)-2-acetolactate (S2AL) to yield (R)-2,3-dihydroxy-isovalerate. In the isomerase reaction, S2AL is rearranged via a Mg-dependent methyl migration to produce 3-hydroxy-3-methyl-2-ketobutyrate (HMKB). In the reductase reaction, this 2-ketoacid undergoes a metal-dependent reduction by NADPH to yield (R)-2,3-dihydroxy-isovalerate. The sequence is that of Ketol-acid reductoisomerase (NADP(+)) from Azoarcus sp. (strain BH72).